The primary structure comprises 765 residues: Protein transport protein Sec23A (765 aa).

Zn(2+)-binding residues include C61, C66, C85, and C88. The stretch at 632–718 (PEPVLLDSSS…EHGGSQARFL (87 aa)) is one Gelsolin-like repeat.

The protein belongs to the SEC23/SEC24 family. SEC23 subfamily. COPII is composed of at least five proteins: the Sec23/24 complex, the Sec13/31 complex and Sar1.

Its subcellular location is the cytoplasmic vesicle. The protein localises to the COPII-coated vesicle membrane. It is found in the endoplasmic reticulum membrane. The protein resides in the cytoplasm. It localises to the cytosol. Component of the coat protein complex II (COPII) which promotes the formation of transport vesicles from the endoplasmic reticulum (ER). The coat has two main functions, the physical deformation of the endoplasmic reticulum membrane into vesicles and the selection of cargo molecules for their transport to the Golgi complex. This Danio rerio (Zebrafish) protein is Protein transport protein Sec23A.